Consider the following 84-residue polypeptide: Delta-thalatoxin-Hhe1a (84 aa).

The first 19 residues, 1-19 (MAYQKIVFVALMLVLAVSA), serve as a signal peptide directing secretion. Residues 20–33 (MRLPDQQDQDISVA) constitute a propeptide that is removed on maturation. Cystine bridges form between Cys38-Cys78, Cys40-Cys68, and Cys61-Cys79.

Belongs to the sea anemone sodium channel inhibitory toxin family. Type II subfamily.

The protein localises to the secreted. Its subcellular location is the nematocyst. Binds specifically to the voltage-gated sodium channel (Nav) and delays its inactivation. This Heterodactyla hemprichii (Hemprich's sea anemone) protein is Delta-thalatoxin-Hhe1a.